The following is a 502-amino-acid chain: Cytochrome c-552 (502 aa).

A signal peptide spans 1–25 (MKYLTKSRVIATIAMLGCLSVSAWA). Position 105 (H105) interacts with heme c. Heme-binding residues include C133, C136, and K137. Heme c is bound by residues C171, C174, H175, C220, C223, and H224. E226, Y227, K271, and Q273 together coordinate Ca(2+). Y227 provides a ligand contact to substrate. H274 contacts substrate. Heme c is bound by residues H285, C292, C295, H296, H311, C324, C327, H328, and H403. Positions 481–502 (RERGLLPEVTPKSVTTPKVDAK) are disordered.

It belongs to the cytochrome c-552 family. Requires Ca(2+) as cofactor. It depends on heme c as a cofactor.

The protein resides in the periplasm. It carries out the reaction 6 Fe(III)-[cytochrome c] + NH4(+) + 2 H2O = 6 Fe(II)-[cytochrome c] + nitrite + 8 H(+). The protein operates within nitrogen metabolism; nitrate reduction (assimilation). Catalyzes the reduction of nitrite to ammonia, consuming six electrons in the process. The protein is Cytochrome c-552 of Haemophilus ducreyi (strain 35000HP / ATCC 700724).